A 109-amino-acid polypeptide reads, in one-letter code: Large ribosomal subunit protein uL24 (109 aa).

It belongs to the universal ribosomal protein uL24 family. As to quaternary structure, part of the 50S ribosomal subunit.

One of two assembly initiator proteins, it binds directly to the 5'-end of the 23S rRNA, where it nucleates assembly of the 50S subunit. Functionally, one of the proteins that surrounds the polypeptide exit tunnel on the outside of the subunit. This is Large ribosomal subunit protein uL24 from Ehrlichia ruminantium (strain Gardel).